The following is a 481-amino-acid chain: UDP-N-acetylmuramoylalanine--D-glutamate ligase (481 aa).

An ATP-binding site is contributed by 108–114 (GTNGKTS).

The protein belongs to the MurCDEF family.

It is found in the cytoplasm. It carries out the reaction UDP-N-acetyl-alpha-D-muramoyl-L-alanine + D-glutamate + ATP = UDP-N-acetyl-alpha-D-muramoyl-L-alanyl-D-glutamate + ADP + phosphate + H(+). Its pathway is cell wall biogenesis; peptidoglycan biosynthesis. In terms of biological role, cell wall formation. Catalyzes the addition of glutamate to the nucleotide precursor UDP-N-acetylmuramoyl-L-alanine (UMA). This is UDP-N-acetylmuramoylalanine--D-glutamate ligase from Bifidobacterium longum subsp. infantis (strain ATCC 15697 / DSM 20088 / JCM 1222 / NCTC 11817 / S12).